The chain runs to 361 residues: tRNA 2-selenouridine synthase (361 aa).

In terms of domain architecture, Rhodanese spans 12 to 135; the sequence is VLKNIPLIDV…FRRYLIDHLE (124 aa). Catalysis depends on cysteine 95, which acts as the S-selanylcysteine intermediate.

Belongs to the SelU family. In terms of assembly, monomer.

The enzyme catalyses 5-methylaminomethyl-2-thiouridine(34) in tRNA + selenophosphate + (2E)-geranyl diphosphate + H2O + H(+) = 5-methylaminomethyl-2-selenouridine(34) in tRNA + (2E)-thiogeraniol + phosphate + diphosphate. It carries out the reaction 5-methylaminomethyl-2-thiouridine(34) in tRNA + (2E)-geranyl diphosphate = 5-methylaminomethyl-S-(2E)-geranyl-thiouridine(34) in tRNA + diphosphate. It catalyses the reaction 5-methylaminomethyl-S-(2E)-geranyl-thiouridine(34) in tRNA + selenophosphate + H(+) = 5-methylaminomethyl-2-(Se-phospho)selenouridine(34) in tRNA + (2E)-thiogeraniol. The catalysed reaction is 5-methylaminomethyl-2-(Se-phospho)selenouridine(34) in tRNA + H2O = 5-methylaminomethyl-2-selenouridine(34) in tRNA + phosphate. Functionally, involved in the post-transcriptional modification of the uridine at the wobble position (U34) of tRNA(Lys), tRNA(Glu) and tRNA(Gln). Catalyzes the conversion of 2-thiouridine (S2U-RNA) to 2-selenouridine (Se2U-RNA). Acts in a two-step process involving geranylation of 2-thiouridine (S2U) to S-geranyl-2-thiouridine (geS2U) and subsequent selenation of the latter derivative to 2-selenouridine (Se2U) in the tRNA chain. This chain is tRNA 2-selenouridine synthase, found in Hydrogenovibrio crunogenus (strain DSM 25203 / XCL-2) (Thiomicrospira crunogena).